Here is a 631-residue protein sequence, read N- to C-terminus: Cyclic nucleotide-gated channel alpha-3 (631 aa).

Residues 1–18 (MAKVNTQCSQPSPTQLSI) show a composition bias toward polar residues. 2 disordered regions span residues 1–21 (MAKV…IKNA) and 71–98 (EVST…RKEE). Residues 1-111 (MAKVNTQCSQ…VDPSSNIYYR (111 aa)) lie on the Cytoplasmic side of the membrane. Positions 87–98 (KPPDGGEGRKEE) are enriched in basic and acidic residues. The chain crosses the membrane as a helical span at residues 112–133 (WLTAIALPVFYNWCLLVCRACF). At 134 to 139 (DELQSE) the chain is on the extracellular side. Residues 140–160 (HLTLWLVLDYSADVLYVLDML) form a helical membrane-spanning segment. Over 161–187 (VRARTGFLEQGLMVRDTKRLWKHYTKT) the chain is Cytoplasmic. The chain crosses the membrane as a helical span at residues 188-207 (LHFKLDILSLIPTDLAYLKL). Residues 208–211 (GVNY) lie on the Extracellular side of the membrane. A helical membrane pass occupies residues 212 to 229 (PELRFNRLLKFSRLFEFF). The Cytoplasmic portion of the chain corresponds to 230 to 239 (DRTETRTNYP). The segment at 239-347 (PNVFRIGNLV…GNVGSMISNM (109 aa)) is ion conduction pathway. Residues 240 to 262 (NVFRIGNLVLYTLIIIHWNACIY) form a helical membrane-spanning segment. At 263–288 (FAISKFIGFGTDSWVYPNTSKPEYAR) the chain is on the extracellular side. N280 carries an N-linked (GalNAc...) asparagine glycan. 2 helical membrane-spanning segments follow: residues 289–319 (LSRK…DEEY) and 320–344 (LFVV…GSMI). Positions 306-309 (TIGE) are selectivity filter. At 345-631 (SNMNAPRVEF…ENSEDASKTD (287 aa)) the chain is on the cytoplasmic side. The tract at residues 349-426 (APRVEFQAKI…TLKKVRIFQD (78 aa)) is C-linker. Positions 429–549 (AGLLVELVLK…EEKGRQILMK (121 aa)) are cyclic nucleotide-binding domain. Residues G489, E490, S492, R505, T506, and D550 each coordinate 3',5'-cyclic GMP. Positions 567-610 (VEEKVEYLESSLDILQTRFARLLAEYSASQMKLKQRLTRLESQM) form a coiled coil.

Belongs to the cyclic nucleotide-gated cation channel (TC 1.A.1.5) family. CNGA3 subfamily. Forms heterotetrameric channels composed of CNGA3 and CNGB3 subunits with 3:1 stoichiometry. As to expression, prominently expressed in retina.

It is found in the cell membrane. The catalysed reaction is Ca(2+)(in) = Ca(2+)(out). It catalyses the reaction Na(+)(in) = Na(+)(out). The enzyme catalyses K(+)(in) = K(+)(out). It carries out the reaction NH4(+)(in) = NH4(+)(out). The catalysed reaction is Rb(+)(in) = Rb(+)(out). It catalyses the reaction Li(+)(in) = Li(+)(out). The enzyme catalyses Cs(+)(in) = Cs(+)(out). Its function is as follows. Pore-forming subunit of the cone cyclic nucleotide-gated channel. Mediates cone photoresponses at bright light converting transient changes in intracellular cGMP levels into electrical signals. In the dark, cGMP levels are high and keep the channel open enabling a steady inward current carried by Na(+) and Ca(2+) ions that leads to membrane depolarization and neurotransmitter release from synaptic terminals. Upon photon absorption cGMP levels decline leading to channel closure and membrane hyperpolarization that ultimately slows neurotransmitter release and signals the presence of light, the end point of the phototransduction cascade. Pore-forming subunit of the gustatory cyclic nucleotide-gated channel. In the taste buds, may sense oral extracellular pH and conduct ion currents that modulate the excitability of taste cells. Conducts cGMP- and cAMP-gated ion currents, with permeability for monovalent and divalent cations. The chain is Cyclic nucleotide-gated channel alpha-3 from Mus musculus (Mouse).